Consider the following 346-residue polypeptide: D-fructose 1,6-bisphosphatase class 2/sedoheptulose 1,7-bisphosphatase (346 aa).

Mn(2+)-binding residues include aspartate 33, glutamate 57, aspartate 97, and glutamate 100. Residues 100-102 (EGT), tyrosine 131, 176-178 (RDR), and 198-200 (DGD) each bind substrate. Glutamate 225 contacts Mn(2+).

The protein belongs to the FBPase class 2 family. As to quaternary structure, homotetramer. Mn(2+) serves as cofactor.

It carries out the reaction beta-D-fructose 1,6-bisphosphate + H2O = beta-D-fructose 6-phosphate + phosphate. The catalysed reaction is D-sedoheptulose 1,7-bisphosphate + H2O = D-sedoheptulose 7-phosphate + phosphate. It participates in carbohydrate biosynthesis; Calvin cycle. Functionally, catalyzes the hydrolysis of fructose 1,6-bisphosphate (Fru 1,6-P2) and sedoheptulose 1,7-bisphosphate (Sed 1,7-P2) to fructose 6-phosphate and sedoheptulose 7-phosphate, respectively. The polypeptide is D-fructose 1,6-bisphosphatase class 2/sedoheptulose 1,7-bisphosphatase (Gloeobacter violaceus (strain ATCC 29082 / PCC 7421)).